We begin with the raw amino-acid sequence, 187 residues long: Adenylate kinase (187 aa).

11-16 (GAGKGT) is an ATP binding site. Residues 31–60 (STGDILREAVKNQTPMGIEAKRYMDAGDLV) form an NMP region. AMP contacts are provided by residues threonine 32, arginine 37, 58 to 60 (DLV), 86 to 89 (GFPR), and glutamine 93. The segment at 127 to 137 (GRAEIEGRADD) is LID. Arginine 128 contacts ATP. Residues arginine 134 and arginine 145 each coordinate AMP. Residue glycine 173 participates in ATP binding.

The protein belongs to the adenylate kinase family. Monomer.

The protein resides in the cytoplasm. It catalyses the reaction AMP + ATP = 2 ADP. It functions in the pathway purine metabolism; AMP biosynthesis via salvage pathway; AMP from ADP: step 1/1. In terms of biological role, catalyzes the reversible transfer of the terminal phosphate group between ATP and AMP. Plays an important role in cellular energy homeostasis and in adenine nucleotide metabolism. The sequence is that of Adenylate kinase from Leptospira borgpetersenii serovar Hardjo-bovis (strain JB197).